Consider the following 499-residue polypeptide: Protein dml1 (499 aa).

The protein belongs to the misato family.

The protein localises to the mitochondrion. Its function is as follows. Involved in the partitioning of the mitochondrial organelle and mitochondrial DNA (mtDNA) inheritance. This chain is Protein dml1 (dml1), found in Aspergillus clavatus (strain ATCC 1007 / CBS 513.65 / DSM 816 / NCTC 3887 / NRRL 1 / QM 1276 / 107).